The following is a 150-amino-acid chain: Transcriptional regulator MraZ (150 aa).

SpoVT-AbrB domains lie at 11 to 53 (TYTP…PFDE) and 82 to 125 (AVDQ…NKDT).

Belongs to the MraZ family. As to quaternary structure, forms oligomers.

It localises to the cytoplasm. The protein localises to the nucleoid. This chain is Transcriptional regulator MraZ, found in Bifidobacterium longum (strain NCC 2705).